A 121-amino-acid chain; its full sequence is Large ribosomal subunit protein uL14c (121 aa).

It belongs to the universal ribosomal protein uL14 family. As to quaternary structure, part of the 50S ribosomal subunit.

It localises to the plastid. The protein resides in the chloroplast. Binds to 23S rRNA. This chain is Large ribosomal subunit protein uL14c, found in Guillardia theta (Cryptophyte).